The sequence spans 229 residues: tRNA (guanine-N(1)-)-methyltransferase (229 aa).

Residues Gly109 and 129-134 (IGDFIL) contribute to the S-adenosyl-L-methionine site.

Belongs to the RNA methyltransferase TrmD family. In terms of assembly, homodimer.

It localises to the cytoplasm. The enzyme catalyses guanosine(37) in tRNA + S-adenosyl-L-methionine = N(1)-methylguanosine(37) in tRNA + S-adenosyl-L-homocysteine + H(+). Specifically methylates guanosine-37 in various tRNAs. The sequence is that of tRNA (guanine-N(1)-)-methyltransferase from Helicobacter pylori (strain Shi470).